The chain runs to 307 residues: Taste receptor type 2 member 10 (307 aa).

Residues 1–6 (MLSVVE) lie on the Extracellular side of the membrane. Residues 7–27 (GILILVVISESVFGVLGNGFI) traverse the membrane as a helical segment. The Cytoplasmic segment spans residues 28–42 (GLVNCIDCAKNKLST). Residues 43–63 (IGFILTGLAISRIFLIWIIIT) form a helical membrane-spanning segment. Over 64-100 (DGFIQIFSPDVYASGNLIEYISYFWVITNQSSIWFAT) the chain is Extracellular. Asn92 is a glycosylation site (N-linked (GlcNAc...) asparagine). A helical membrane pass occupies residues 101-121 (SLSIFYFLKIANFSNYIFLWL). Over 122-126 (KSRIN) the chain is Cytoplasmic. A helical transmembrane segment spans residues 127–147 (RVLPLLMGFLLISCLLNFAYI). The Extracellular segment spans residues 148–179 (VKILNDLKMKNDTVWRLNMYKSEYFIKQLLLN). Asn158 is a glycosylation site (N-linked (GlcNAc...) asparagine). A helical transmembrane segment spans residues 180–200 (LGVIFFFTLSLITSVLLIISL). Topologically, residues 201-227 (WRHNRQMQSNVTGLRDSITEAHVKAMK) are cytoplasmic. The helical transmembrane segment at 228–248 (VLISFIILFILYFIGIAIEIS) threads the bilayer. The Extracellular portion of the chain corresponds to 249–257 (YFTVPENKL). The chain crosses the membrane as a helical span at residues 258 to 278 (LLIFGMTTTAIYPWGHSFILI). Over 279–307 (LGNSKLKQASLRVLQQLKCCEERKNLRAT) the chain is Cytoplasmic.

This sequence belongs to the G-protein coupled receptor T2R family.

The protein localises to the membrane. Receptor that may play a role in the perception of bitterness and is gustducin-linked. May play a role in sensing the chemical composition of the gastrointestinal content. The activity of this receptor may stimulate alpha gustducin, mediate PLC-beta-2 activation and lead to the gating of TRPM5. This is Taste receptor type 2 member 10 (TAS2R10) from Papio hamadryas (Hamadryas baboon).